The chain runs to 133 residues: Ribonuclease P protein component (133 aa).

Belongs to the RnpA family. Consists of a catalytic RNA component (M1 or rnpB) and a protein subunit.

The enzyme catalyses Endonucleolytic cleavage of RNA, removing 5'-extranucleotides from tRNA precursor.. RNaseP catalyzes the removal of the 5'-leader sequence from pre-tRNA to produce the mature 5'-terminus. It can also cleave other RNA substrates such as 4.5S RNA. The protein component plays an auxiliary but essential role in vivo by binding to the 5'-leader sequence and broadening the substrate specificity of the ribozyme. In Corynebacterium glutamicum (strain R), this protein is Ribonuclease P protein component.